Here is a 1385-residue protein sequence, read N- to C-terminus: DNA-directed RNA polymerase subunit beta'' (1385 aa).

Cysteine 224, cysteine 294, cysteine 301, and cysteine 304 together coordinate Zn(2+).

Belongs to the RNA polymerase beta' chain family. RpoC2 subfamily. In plastids the minimal PEP RNA polymerase catalytic core is composed of four subunits: alpha, beta, beta', and beta''. When a (nuclear-encoded) sigma factor is associated with the core the holoenzyme is formed, which can initiate transcription. The cofactor is Zn(2+).

The protein resides in the plastid. The protein localises to the chloroplast. It carries out the reaction RNA(n) + a ribonucleoside 5'-triphosphate = RNA(n+1) + diphosphate. Its function is as follows. DNA-dependent RNA polymerase catalyzes the transcription of DNA into RNA using the four ribonucleoside triphosphates as substrates. This Illicium oligandrum (Star anise) protein is DNA-directed RNA polymerase subunit beta''.